We begin with the raw amino-acid sequence, 602 residues long: Chaperone protein dnaK (602 aa).

The protein belongs to the heat shock protein 70 family.

The protein localises to the plastid. The protein resides in the chloroplast. Its function is as follows. Acts as a chaperone. The chain is Chaperone protein dnaK from Thalassiosira pseudonana (Marine diatom).